Reading from the N-terminus, the 311-residue chain is Malate dehydrogenase (311 aa).

Residues 7–13 (GAAGGIG) and Asp-34 contribute to the NAD(+) site. Substrate contacts are provided by Arg-81 and Arg-87. NAD(+) contacts are provided by residues Asn-94 and 117 to 119 (ITN). Positions 119 and 153 each coordinate substrate. The active-site Proton acceptor is His-177. Met-227 contacts NAD(+).

The protein belongs to the LDH/MDH superfamily. MDH type 1 family. Homodimer.

It catalyses the reaction (S)-malate + NAD(+) = oxaloacetate + NADH + H(+). Functionally, catalyzes the reversible oxidation of malate to oxaloacetate. The sequence is that of Malate dehydrogenase from Vibrio parahaemolyticus serotype O3:K6 (strain RIMD 2210633).